The chain runs to 124 residues: Large ribosomal subunit protein bL12 (124 aa).

Belongs to the bacterial ribosomal protein bL12 family. In terms of assembly, homodimer. Part of the ribosomal stalk of the 50S ribosomal subunit. Forms a multimeric L10(L12)X complex, where L10 forms an elongated spine to which 2 to 4 L12 dimers bind in a sequential fashion. Binds GTP-bound translation factors.

Functionally, forms part of the ribosomal stalk which helps the ribosome interact with GTP-bound translation factors. Is thus essential for accurate translation. In Borreliella burgdorferi (strain ZS7) (Borrelia burgdorferi), this protein is Large ribosomal subunit protein bL12.